Reading from the N-terminus, the 305-residue chain is Cysteine synthase (305 aa).

K45 carries the N6-(pyridoxal phosphate)lysine modification. Pyridoxal 5'-phosphate-binding positions include N75, 179–183, and S266; that span reads GSGGT.

The protein belongs to the cysteine synthase/cystathionine beta-synthase family. In terms of assembly, homodimer. It depends on pyridoxal 5'-phosphate as a cofactor.

The catalysed reaction is O-acetyl-L-serine + hydrogen sulfide = L-cysteine + acetate. The protein operates within amino-acid biosynthesis; L-cysteine biosynthesis; L-cysteine from L-serine: step 2/2. This Helicobacter pylori (strain J99 / ATCC 700824) (Campylobacter pylori J99) protein is Cysteine synthase (cysM).